Here is a 459-residue protein sequence, read N- to C-terminus: Zinc finger protein ZPR1 (459 aa).

Over residues 1 to 29 (MSAGGAVEPGLPAAAAAPSAAPARDPGPG) the composition is skewed to low complexity. The interval 1-43 (MSAGGAVEPGLPAAAAAPSAAPARDPGPGHLFRPISAEDEEQQ) is disordered. 2 consecutive C4-type zinc fingers follow at residues 51 to 83 (CMNCYRNGMTRLLLTKIPFFREIIVSSFSCEHC) and 259 to 291 (CPECNAPAQTNMKLVQIPHFKEVIIMATNCENC). Residues 438–459 (NEELGLNDMKTEGYETGLPAQR) form a disordered region.

Belongs to the ZPR1 family. As to quaternary structure, component of an import snRNP complex composed of KPNB1, SNUPN, SMN1 and ZNF259. Interacts (via C-terminal region) with SMN1 (via C-terminal region); the interaction occurs after treatment with serum. Interacts with elongation factor 1-alpha EEF1A1; the interaction occurs in a epidermal growth factor (EGF)-dependent manner. Interacts (via zinc fingers) with EGFR (via C-terminal cytoplasmic kinase domain); the interaction is negatively regulated in response to epidermal growth factor (EGF) stimulation and EGFR kinase activity. May also bind to the PDGFR receptor.

The protein resides in the nucleus. The protein localises to the cytoplasm. Its subcellular location is the nucleolus. It localises to the perinuclear region. It is found in the gem. The protein resides in the cajal body. The protein localises to the cell projection. Its subcellular location is the axon. It localises to the growth cone. In terms of biological role, acts as a signaling molecule that communicates proliferative growth signals from the cytoplasm to the nucleus. Plays a role for the localization and accumulation of the survival motor neuron protein SMN1 in sub-nuclear bodies, including gems and Cajal bodies. Induces neuron differentiation and stimulates axonal growth and formation of growth cone in spinal cord motor neurons. Plays a role in the splicing of cellular pre-mRNAs. May be involved in H(2)O(2)-induced neuronal cell death. This chain is Zinc finger protein ZPR1 (ZNF259), found in Bos taurus (Bovine).